The following is a 176-amino-acid chain: Outer membrane protein assembly factor BamE (176 aa).

An N-terminal signal peptide occupies residues 1–21 (MQNAKLMLTCLAFAGLAALAG). Residue Cys22 is the site of N-palmitoyl cysteine attachment. Cys22 carries S-diacylglycerol cysteine lipidation. The tract at residues 121–176 (KEGSTTVTQPADQQKPEAQKEEPPKPGSTLEQLQREVDEAQPVPVPTPEPLDPSPQ) is disordered. Residues 123–132 (GSTTVTQPAD) are compositionally biased toward polar residues. Positions 134 to 144 (QKPEAQKEEPP) are enriched in basic and acidic residues. Residues 163–176 (VPVPTPEPLDPSPQ) are compositionally biased toward pro residues.

Belongs to the BamE family. As to quaternary structure, part of the Bam complex.

The protein resides in the cell outer membrane. Part of the outer membrane protein assembly complex, which is involved in assembly and insertion of beta-barrel proteins into the outer membrane. May have a structural role in maintaining the cell envelope integrity. The polypeptide is Outer membrane protein assembly factor BamE (Pseudomonas aeruginosa (strain ATCC 15692 / DSM 22644 / CIP 104116 / JCM 14847 / LMG 12228 / 1C / PRS 101 / PAO1)).